Reading from the N-terminus, the 994-residue chain is Phosphoenolpyruvate carboxylase (994 aa).

Positions methionine 1–arginine 66 are disordered. Low complexity-rich tracts occupy residues alanine 14–glutamate 25 and alanine 41–alanine 54. Catalysis depends on residues histidine 204 and lysine 646.

This sequence belongs to the PEPCase type 1 family. It depends on Mg(2+) as a cofactor.

The enzyme catalyses oxaloacetate + phosphate = phosphoenolpyruvate + hydrogencarbonate. In terms of biological role, forms oxaloacetate, a four-carbon dicarboxylic acid source for the tricarboxylic acid cycle. This chain is Phosphoenolpyruvate carboxylase, found in Burkholderia mallei (strain NCTC 10247).